The sequence spans 210 residues: Redox-sensing transcriptional repressor Rex (210 aa).

Positions 16–55 (IYSRYLRQLIEEGVETVSSGEIAAGVGVSSAQVRKDLAYF) form a DNA-binding region, H-T-H motif. 90–95 (GAGKLG) provides a ligand contact to NAD(+).

This sequence belongs to the transcriptional regulatory Rex family. As to quaternary structure, homodimer.

The protein resides in the cytoplasm. Functionally, modulates transcription in response to changes in cellular NADH/NAD(+) redox state. In Syntrophomonas wolfei subsp. wolfei (strain DSM 2245B / Goettingen), this protein is Redox-sensing transcriptional repressor Rex.